Reading from the N-terminus, the 181-residue chain is Large ribosomal subunit protein uL6 (181 aa).

This sequence belongs to the universal ribosomal protein uL6 family. Part of the 50S ribosomal subunit.

In terms of biological role, this protein binds to the 23S rRNA, and is important in its secondary structure. It is located near the subunit interface in the base of the L7/L12 stalk, and near the tRNA binding site of the peptidyltransferase center. This chain is Large ribosomal subunit protein uL6, found in Flavobacterium psychrophilum (strain ATCC 49511 / DSM 21280 / CIP 103535 / JIP02/86).